The following is a 361-amino-acid chain: tRNA-specific 2-thiouridylase MnmA (361 aa).

ATP is bound by residues 11–18 and Met-37; that span reads GMSGGVDS. An interaction with target base in tRNA region spans residues 97-99; the sequence is NPD. Catalysis depends on Cys-102, which acts as the Nucleophile. Cys-102 and Cys-199 are oxidised to a cystine. ATP is bound at residue Gly-126. Residues 149–151 are interaction with tRNA; sequence KDQ. Cys-199 acts as the Cysteine persulfide intermediate in catalysis. The interaction with tRNA stretch occupies residues 311–312; it reads RY.

Belongs to the MnmA/TRMU family.

It is found in the cytoplasm. It catalyses the reaction S-sulfanyl-L-cysteinyl-[protein] + uridine(34) in tRNA + AH2 + ATP = 2-thiouridine(34) in tRNA + L-cysteinyl-[protein] + A + AMP + diphosphate + H(+). Catalyzes the 2-thiolation of uridine at the wobble position (U34) of tRNA, leading to the formation of s(2)U34. This is tRNA-specific 2-thiouridylase MnmA from Cupriavidus taiwanensis (strain DSM 17343 / BCRC 17206 / CCUG 44338 / CIP 107171 / LMG 19424 / R1) (Ralstonia taiwanensis (strain LMG 19424)).